The primary structure comprises 442 residues: Cyclic 2,3-diphosphoglycerate synthetase (442 aa).

It belongs to the cyclic 2,3-diphosphoglycerate synthetase family.

Its subcellular location is the cytoplasm. It carries out the reaction (2R)-2,3-bisphosphoglycerate + ATP + H(+) = cyclic (2R)-2,3-bisphosphoglycerate + ADP + phosphate. Its function is as follows. Catalyzes the formation of cyclic 2,3-diphosphoglycerate (cDPG) by formation of an intramolecular phosphoanhydride bond at the expense of ATP. In Rubrobacter xylanophilus (strain DSM 9941 / JCM 11954 / NBRC 16129 / PRD-1), this protein is Cyclic 2,3-diphosphoglycerate synthetase.